Consider the following 930-residue polypeptide: MEIATRCEVGAMRGPSSDSVSHDIPQPQSPPSVKIRKTAFKFFGGRKSICVLPSFFGGRGRSQRKGSSKTGVTKSQTYDGVSRACWDDLGRSSSEVASGDFEFCSEPQKSQEDHGKSQSLPRQRRGLRGLFSSIRRHRKNKNVEVEKREALEMSSSFHAKTVPGALPSVSDRGDYHGDSQGEELVPDVPNQTTGSECELPLAATECTIDVTLVPEKRRSRVEMDKRRRAEEEGIGEDEKTGRQEGLMTYHQPLSAESELDRLAEQNVDVPDGEPPVASCSSENLVFGDVSSLKSFDSLTGCGDIIADQDDVSVAESSVSADRGSRNAGKRSSCFVTYQGGGEEMATPDEIDADYLQSLWESETSNEVCYIPSDRGSDSPSLTPDQQLSSIRATSSSSPMGITETALTPADLLSPQSDRQESVPNSDEGYYDSTTPGMEEESRERPHQERLPRDSYSGDALYELFEPDDRLLSPSLPPKDAHSFVGAPLQADKSPTNPLYSLASTAIETGAMETEEERLSKIQHALLCCELQNLRSPSKNQLLFHSDCFYDDSNLPVDDSKQDLQEVINQRYPQSPPRSQAVKEGVPRIRGQVQESSLFAPCADSVLNPQVIETTRPQPQSDDQGSLRPSRGCSQSQEELMVCFSQALVDFTKNTRLYRNSTESLDGSESSSPFGPSLRALPAIVTFDVVDMENEGECEQQTDLAEEEEELASPYEPFEDDGCYLQQDAFAECDQRTFDAYEQSLLLSNAWGIASLPRHLSLGRPCPPVPAPLALNRRSRSLDTDSLEFQTSEIYTSVTKYDSKGTAFSQSRTVDCNDMDFPRQPCRITVDSWRRGYRQNFDSSNASQQELKLPHLSQSTVRPSHLPLKNNCRSRNLPAATRVDGEGEILFGGGDALYPCSYPPMGTQWKNRPVGVTQGVPHLRSEQSADH.

6 disordered regions span residues 1–33, 55–76, 104–133, 161–193, 222–245, and 366–454; these read MEIA…PPSV, FFGG…TKSQ, CSEP…LFSS, TVPG…NQTT, EMDK…RQEG, and EVCY…PRDS. The span at 222-242 shows a compositional bias: basic and acidic residues; the sequence is EMDKRRRAEEEGIGEDEKTGR. Polar residues-rich tracts occupy residues 377-399 and 413-424; these read DSPS…SSPM and SPQSDRQESVPN. The span at 439–452 shows a compositional bias: basic and acidic residues; sequence EESRERPHQERLPR.

Belongs to the Amer family.

The protein resides in the cytoplasm. The protein localises to the cell membrane. Its subcellular location is the nucleus. Regulator of the canonical Wnt signaling pathway. Acts by specifically binding phosphatidylinositol 4,5-bisphosphate (PtdIns(4,5)P2), translocating to the cell membrane and interacting with key regulators of the canonical Wnt signaling pathway, such as components of the beta-catenin destruction complex. Acts both as a positive and negative regulator of the Wnt signaling pathway, depending on the context. In Danio rerio (Zebrafish), this protein is APC membrane recruitment protein 1 (amer1).